A 250-amino-acid polypeptide reads, in one-letter code: Thiamine thiazole synthase (250 aa).

NAD(+) is bound by residues S36, E55–E56, G63, V126, and H152–D154. Residues D154 and H169 each coordinate Fe cation. M216 contacts NAD(+). Position 226 (R226) interacts with glycine.

It belongs to the THI4 family. In terms of assembly, homooctamer; tetramer of dimers. It depends on Fe(2+) as a cofactor.

It catalyses the reaction hydrogen sulfide + glycine + NAD(+) = ADP-5-ethyl-4-methylthiazole-2-carboxylate + nicotinamide + 3 H2O + H(+). Its pathway is cofactor biosynthesis; thiamine diphosphate biosynthesis. Involved in the biosynthesis of the thiazole moiety of thiamine. Catalyzes the conversion of NAD and glycine to adenosine diphosphate 5-(2-hydroxyethyl)-4-methylthiazole-2-carboxylate (ADT), an adenylated thiazole intermediate, using free sulfide as a source of sulfur. The chain is Thiamine thiazole synthase from Thermotoga maritima (strain ATCC 43589 / DSM 3109 / JCM 10099 / NBRC 100826 / MSB8).